Consider the following 140-residue polypeptide: Endoribonuclease YbeY (140 aa).

Zn(2+)-binding residues include H99, H103, and H109.

It belongs to the endoribonuclease YbeY family. The cofactor is Zn(2+).

The protein localises to the cytoplasm. Functionally, single strand-specific metallo-endoribonuclease involved in late-stage 70S ribosome quality control and in maturation of the 3' terminus of the 16S rRNA. This Wolinella succinogenes (strain ATCC 29543 / DSM 1740 / CCUG 13145 / JCM 31913 / LMG 7466 / NCTC 11488 / FDC 602W) (Vibrio succinogenes) protein is Endoribonuclease YbeY.